The following is a 193-amino-acid chain: Glycerol-3-phosphate acyltransferase (193 aa).

5 helical membrane passes run 4–24 (LALIMIIIAYLLGSISSAVLI), 56–76 (GLVLLCDILKGMLPVWGGYFL), 80–100 (PLLLGIIAIAACLGHMYPLFF), 116–136 (APIGLDLTGLLFGTWVVIVLI), and 152–174 (PLFTWLVKPQYTLPVAMLSCLIV).

It belongs to the PlsY family. As to quaternary structure, probably interacts with PlsX.

Its subcellular location is the cell inner membrane. The enzyme catalyses an acyl phosphate + sn-glycerol 3-phosphate = a 1-acyl-sn-glycero-3-phosphate + phosphate. It functions in the pathway lipid metabolism; phospholipid metabolism. Functionally, catalyzes the transfer of an acyl group from acyl-phosphate (acyl-PO(4)) to glycerol-3-phosphate (G3P) to form lysophosphatidic acid (LPA). This enzyme utilizes acyl-phosphate as fatty acyl donor, but not acyl-CoA or acyl-ACP. This chain is Glycerol-3-phosphate acyltransferase, found in Aliivibrio salmonicida (strain LFI1238) (Vibrio salmonicida (strain LFI1238)).